Here is a 428-residue protein sequence, read N- to C-terminus: Dihydroorotase (428 aa).

Zn(2+)-binding residues include H60 and H62. Residues 62-64 and N94 contribute to the substrate site; that span reads HLR. The Zn(2+) site is built by D152, H179, and H232. Substrate is bound at residue N278. D305 contacts Zn(2+). Residue D305 is part of the active site. Residues H309 and 323–324 each bind substrate; that span reads FG.

It belongs to the metallo-dependent hydrolases superfamily. DHOase family. Class I DHOase subfamily. Zn(2+) is required as a cofactor.

It catalyses the reaction (S)-dihydroorotate + H2O = N-carbamoyl-L-aspartate + H(+). The protein operates within pyrimidine metabolism; UMP biosynthesis via de novo pathway; (S)-dihydroorotate from bicarbonate: step 3/3. Its function is as follows. Catalyzes the reversible cyclization of carbamoyl aspartate to dihydroorotate. This chain is Dihydroorotase, found in Anoxybacillus flavithermus (strain DSM 21510 / WK1).